Reading from the N-terminus, the 103-residue chain is uncharacterized protein (103 aa).

This is an uncharacterized protein from Acanthamoeba polyphaga mimivirus (APMV).